Here is a 56-residue protein sequence, read N- to C-terminus: Large ribosomal subunit protein bL32 (56 aa).

Residues 1–34 (MAVQQNKPSRSKRGMRRAHDALKTSTISVDKTSG) form a disordered region.

It belongs to the bacterial ribosomal protein bL32 family.

The protein is Large ribosomal subunit protein bL32 of Baumannia cicadellinicola subsp. Homalodisca coagulata.